Here is a 414-residue protein sequence, read N- to C-terminus: Esterase FrsA (414 aa).

Belongs to the FrsA family.

It catalyses the reaction a carboxylic ester + H2O = an alcohol + a carboxylate + H(+). In terms of biological role, catalyzes the hydrolysis of esters. This Enterobacter sp. (strain 638) protein is Esterase FrsA.